The following is a 623-amino-acid chain: Chaperone protein HtpG (623 aa).

The segment at 1-336 is a; substrate-binding; sequence MSETNTQKAA…TEDLPLNVSR (336 aa). Positions 337–546 are b; it reads EMLQATPVLA…DGGPDLTMQR (210 aa). Residues 547–623 form a c region; it reads LMRRSGQAMP…ATLLAGPAAE (77 aa).

This sequence belongs to the heat shock protein 90 family. Homodimer.

The protein localises to the cytoplasm. Its function is as follows. Molecular chaperone. Has ATPase activity. This is Chaperone protein HtpG from Gluconobacter oxydans (strain 621H) (Gluconobacter suboxydans).